The sequence spans 484 residues: Regulatory protein ViaA (484 aa).

It belongs to the ViaA family. As to quaternary structure, homodimer. Interacts with RavA.

The protein resides in the cytoplasm. In terms of biological role, component of the RavA-ViaA chaperone complex, which may act on the membrane to optimize the function of some of the respiratory chains. ViaA stimulates the ATPase activity of RavA. The sequence is that of Regulatory protein ViaA from Edwardsiella ictaluri (strain 93-146).